Consider the following 559-residue polypeptide: Poly [ADP-ribose] polymerase 2 (559 aa).

The segment at 1 to 58 (MAPRRQRSGSGRRVLNEAKKVDNGNKATEDDSPPGKKMRTCQRKGPMAGGKDADRTKD) is disordered. The tract at residues 1 to 83 (MAPRRQRSGS…VDPECAAKLG (83 aa)) is N-terminal region (NTR). Positions 14–29 (VLNEAKKVDNGNKATE) are enriched in basic and acidic residues. 2 short sequence motifs (nuclear localization signal) span residues 19 to 20 (KK) and 33 to 39 (PPGKKMR). N6-(ADP-ribosyl)lysine; alternate is present on residues Lys-36 and Lys-37. N6-acetyllysine; alternate is present on residues Lys-36 and Lys-37. The region spanning 84-181 (KAHVYCEGDD…ENFEKVPGKY (98 aa)) is the WGR domain. The region spanning 207–324 (ESQLDLRVQE…DIEIALKLVK (118 aa)) is the PARP alpha-helical domain. Ser-208 is modified (phosphoserine). The 228-residue stretch at 332–559 (HPLDQHYRNL…KIQFNFLQLW (228 aa)) folds into the PARP catalytic domain. Residues 404–406 (HGS), Gly-413, Arg-420, and Ser-446 contribute to the NAD(+) site. Catalysis depends on Glu-534, which acts as the For poly [ADP-ribose] polymerase activity.

This sequence belongs to the ARTD/PARP family. As to quaternary structure, component of a base excision repair (BER) complex, containing at least XRCC1, PARP1, POLB and LRIG3. Homo- and heterodimer with PARP1. Interacts (via the PARP catalytic domain) with HPF1. Interacts with core nucleosomes. In terms of processing, auto poly-ADP-ribosylated on serine residues, leading to dissociation of the PARP2-HPF1 complex from chromatin. Poly-ADP-ribosylated by PARP1. Acetylation reduces DNA binding and enzymatic activity. Post-translationally, proteolytically cleaved by caspase-8 (CASP8) in response to apoptosis, leading to its inactivation. As to expression, widely expressed; the highest levels were in testis followed by ovary. Expression is correlated with proliferation, with higher levels occurring during early fetal development and organogenesis and in the highly proliferative cell compartments of adult.

It is found in the nucleus. The protein resides in the chromosome. It catalyses the reaction NAD(+) + (ADP-D-ribosyl)n-acceptor = nicotinamide + (ADP-D-ribosyl)n+1-acceptor + H(+).. The enzyme catalyses L-seryl-[protein] + NAD(+) = O-(ADP-D-ribosyl)-L-seryl-[protein] + nicotinamide + H(+). The catalysed reaction is L-aspartyl-[protein] + NAD(+) = 4-O-(ADP-D-ribosyl)-L-aspartyl-[protein] + nicotinamide. It carries out the reaction L-glutamyl-[protein] + NAD(+) = 5-O-(ADP-D-ribosyl)-L-glutamyl-[protein] + nicotinamide. Its activity is regulated as follows. ADP-ribosyltransferase activity is regulated via an allosteric activation mechanism. In absence of activation signal, PARP2 is autoinhibited by the PARP alpha-helical domain (also named HD region), which prevents effective NAD(+)-binding. Activity is highly stimulated by signals, which unfold the PARP alpha-helical domain, relieving autoinhibition. Poly-ADP-ribosyltransferase activity is tightly regulated and PARP2 is removed from damaged chromatin following initial poly-ADP-ribosylation of chromatin to avoid prolonged residence (trapping) that has cytotoxic consequences. CHD1L promotes PARP2 removal from chromatin. Its function is as follows. Poly-ADP-ribosyltransferase that mediates poly-ADP-ribosylation of proteins and plays a key role in DNA repair. Mediates glutamate, aspartate or serine ADP-ribosylation of proteins: the ADP-D-ribosyl group of NAD(+) is transferred to the acceptor carboxyl group of target residues and further ADP-ribosyl groups are transferred to the 2'-position of the terminal adenosine moiety, building up a polymer with an average chain length of 20-30 units. Serine ADP-ribosylation of proteins constitutes the primary form of ADP-ribosylation of proteins in response to DNA damage. Mediates glutamate and aspartate ADP-ribosylation of target proteins in absence of HPF1. Following interaction with HPF1, catalyzes serine ADP-ribosylation of target proteins; HPF1 conferring serine specificity by completing the PARP2 active site. PARP2 initiates the repair of double-strand DNA breaks: recognizes and binds DNA breaks within chromatin and recruits HPF1, licensing serine ADP-ribosylation of target proteins, such as histones, thereby promoting decompaction of chromatin and the recruitment of repair factors leading to the reparation of DNA strand breaks. HPF1 initiates serine ADP-ribosylation but restricts the polymerase activity of PARP2 in order to limit the length of poly-ADP-ribose chains. Specifically mediates formation of branched poly-ADP-ribosylation. Branched poly-ADP-ribose chains are specifically recognized by some factors, such as APLF. In addition to proteins, also able to ADP-ribosylate DNA: preferentially acts on 5'-terminal phosphates at DNA strand breaks termini in nicked duplex. The protein is Poly [ADP-ribose] polymerase 2 (Parp2) of Mus musculus (Mouse).